A 217-amino-acid chain; its full sequence is 3,4-dihydroxy-2-butanone 4-phosphate synthase (217 aa).

Residues 37–38, Asp42, 150–154, and Glu174 contribute to the D-ribulose 5-phosphate site; these read RE and RRGHT. Glu38 serves as a coordination point for Mg(2+). His153 contacts Mg(2+).

This sequence belongs to the DHBP synthase family. Homodimer. Mg(2+) is required as a cofactor. The cofactor is Mn(2+).

It catalyses the reaction D-ribulose 5-phosphate = (2S)-2-hydroxy-3-oxobutyl phosphate + formate + H(+). It participates in cofactor biosynthesis; riboflavin biosynthesis; 2-hydroxy-3-oxobutyl phosphate from D-ribulose 5-phosphate: step 1/1. Functionally, catalyzes the conversion of D-ribulose 5-phosphate to formate and 3,4-dihydroxy-2-butanone 4-phosphate. This chain is 3,4-dihydroxy-2-butanone 4-phosphate synthase, found in Syntrophotalea carbinolica (strain DSM 2380 / NBRC 103641 / GraBd1) (Pelobacter carbinolicus).